Consider the following 182-residue polypeptide: U1 small nuclear ribonucleoprotein C (182 aa).

Residues 4 to 36 (YLCDYCQVWLTHDSQSVRKAHNAGRAHIQNVQD) form a Matrin-type zinc finger. A disordered region spans residues 129–182 (PQTTASSNTQLTQQQQSLPQTNEHQRARTHSNANNHFTKTHHQGQRSHQRFVRA). A compositionally biased stretch (low complexity) spans 130-150 (QTTASSNTQLTQQQQSLPQTN). Residues 166-182 (TKTHHQGQRSHQRFVRA) show a composition bias toward basic residues.

It belongs to the U1 small nuclear ribonucleoprotein C family. In terms of assembly, U1 snRNP is composed of the 7 core Sm proteins smb1, smd1, smd2, smd3, sme1, smf1 and smg1 (Sm proteins B, D1, D2, D3, E, F and G, respectively) that assemble in a heptameric protein ring on the Sm site of the small nuclear RNA to form the core snRNP, and at least 9 U1 snRNP-specific proteins usp101/U1-70K, usp102/U1-A, usp103/U1-C, usp106/LUC7, usp105/PRP39, usp104/PRP40, usp107/U1-H, usp108/U1-J and usp109/U1-L. usp103/U1-C interacts with U1 snRNA and the 5' splice-site region of the pre-mRNA.

It localises to the nucleus. Its function is as follows. Component of the spliceosomal U1 snRNP, which is essential for recognition of the pre-mRNA 5' splice-site and the subsequent assembly of the spliceosome. usp103/U1-C is directly involved in initial 5' splice-site recognition for both constitutive and regulated alternative splicing. The interaction with the 5' splice-site seems to precede base-pairing between the pre-mRNA and the U1 snRNA. Stimulates commitment or early (E) complex formation by stabilizing the base pairing of the 5' end of the U1 snRNA and the 5' splice-site region. This Schizosaccharomyces pombe (strain 972 / ATCC 24843) (Fission yeast) protein is U1 small nuclear ribonucleoprotein C (usp103).